The primary structure comprises 183 residues: Ribosome rescue factor SmrB (183 aa).

The Smr domain maps to 98 to 173 (LDLHGLTQLQ…GDAALLVLIE (76 aa)).

This sequence belongs to the SmrB family. Associates with collided ribosomes, but not with correctly translating polysomes.

In terms of biological role, acts as a ribosome collision sensor. Detects stalled/collided disomes (pairs of ribosomes where the leading ribosome is stalled and a second ribosome has collided with it) and endonucleolytically cleaves mRNA at the 5' boundary of the stalled ribosome. Stalled/collided disomes form a new interface (primarily via the 30S subunits) that binds SmrB. Cleaved mRNA becomes available for tmRNA ligation, leading to ribosomal subunit dissociation and rescue of stalled ribosomes. In Shigella boydii serotype 18 (strain CDC 3083-94 / BS512), this protein is Ribosome rescue factor SmrB.